The sequence spans 101 residues: Integration host factor subunit beta (101 aa).

The protein belongs to the bacterial histone-like protein family. In terms of assembly, heterodimer of an alpha and a beta chain.

In terms of biological role, this protein is one of the two subunits of integration host factor, a specific DNA-binding protein that functions in genetic recombination as well as in transcriptional and translational control. The sequence is that of Integration host factor subunit beta from Janthinobacterium sp. (strain Marseille) (Minibacterium massiliensis).